Reading from the N-terminus, the 257-residue chain is Probable enoyl-CoA hydratase echA8 (257 aa).

Belongs to the enoyl-CoA hydratase/isomerase family.

The enzyme catalyses a (3S)-3-hydroxyacyl-CoA = a (2E)-enoyl-CoA + H2O. The catalysed reaction is a 4-saturated-(3S)-3-hydroxyacyl-CoA = a (3E)-enoyl-CoA + H2O. Functionally, could possibly oxidize fatty acids using specific components. The protein is Probable enoyl-CoA hydratase echA8 (echA8) of Mycobacterium tuberculosis (strain CDC 1551 / Oshkosh).